Reading from the N-terminus, the 384-residue chain is S-adenosylmethionine synthase (384 aa).

H15 lines the ATP pocket. D17 contacts Mg(2+). E43 lines the K(+) pocket. L-methionine contacts are provided by E56 and Q99. The tract at residues 99-109 is flexible loop; sequence QSPDINQGVDR. ATP is bound by residues 164 to 166, 230 to 231, D239, 245 to 246, A262, and K266; these read DAK, RF, and RK. D239 contacts L-methionine. K270 is an L-methionine binding site.

The protein belongs to the AdoMet synthase family. As to quaternary structure, homotetramer; dimer of dimers. It depends on Mg(2+) as a cofactor. K(+) is required as a cofactor.

Its subcellular location is the cytoplasm. It carries out the reaction L-methionine + ATP + H2O = S-adenosyl-L-methionine + phosphate + diphosphate. The protein operates within amino-acid biosynthesis; S-adenosyl-L-methionine biosynthesis; S-adenosyl-L-methionine from L-methionine: step 1/1. In terms of biological role, catalyzes the formation of S-adenosylmethionine (AdoMet) from methionine and ATP. The overall synthetic reaction is composed of two sequential steps, AdoMet formation and the subsequent tripolyphosphate hydrolysis which occurs prior to release of AdoMet from the enzyme. The protein is S-adenosylmethionine synthase of Citrobacter koseri (strain ATCC BAA-895 / CDC 4225-83 / SGSC4696).